A 393-amino-acid polypeptide reads, in one-letter code: Nuclear hormone receptor family member nhr-90 (393 aa).

Positions L6–H79 form a DNA-binding region, nuclear receptor. The segment at C9 to C30 adopts an NR C4-type zinc-finger fold. The NR C4-type; degenerate zinc finger occupies C47 to C62. The NR LBD domain maps to D121 to T388.

Belongs to the nuclear hormone receptor family.

It is found in the nucleus. Functionally, orphan nuclear receptor. In Caenorhabditis elegans, this protein is Nuclear hormone receptor family member nhr-90 (nhr-90).